Reading from the N-terminus, the 89-residue chain is Small ribosomal subunit protein uS15 (89 aa).

This sequence belongs to the universal ribosomal protein uS15 family. In terms of assembly, part of the 30S ribosomal subunit. Forms a bridge to the 50S subunit in the 70S ribosome, contacting the 23S rRNA.

Its function is as follows. One of the primary rRNA binding proteins, it binds directly to 16S rRNA where it helps nucleate assembly of the platform of the 30S subunit by binding and bridging several RNA helices of the 16S rRNA. Functionally, forms an intersubunit bridge (bridge B4) with the 23S rRNA of the 50S subunit in the ribosome. This Azotobacter vinelandii (strain DJ / ATCC BAA-1303) protein is Small ribosomal subunit protein uS15.